A 180-amino-acid polypeptide reads, in one-letter code: Epididymal-specific lipocalin-6 (180 aa).

Residues Met-1 to Ala-20 form the signal peptide. Cysteines 81 and 174 form a disulfide.

The protein belongs to the calycin superfamily. Lipocalin family.

The protein localises to the secreted. May play a role in male fertility. The protein is Epididymal-specific lipocalin-6 (LCN6) of Macaca mulatta (Rhesus macaque).